The following is a 1210-amino-acid chain: A disintegrin and metalloproteinase with thrombospondin motifs 19 (1210 aa).

The signal sequence occupies residues 1–30 (MGPEMRLTRICCCCCLLYQLGFLSHGTTSG). A propeptide spanning residues 31-319 (LQLTPDLEEW…KIADNRREKR (289 aa)) is cleaved from the precursor. N-linked (GlcNAc...) asparagine glycosylation is present at N54. The segment at 55–166 (ATGLSGGSSD…PAQQEEPSAE (112 aa)) is disordered. A compositionally biased stretch (gly residues) spans 69-78 (RSSGGGGRGQ). The span at 84 to 98 (REVRSVARAPQEEAT) shows a compositional bias: basic and acidic residues. Positions 113-122 (GAEDEEELES) are enriched in acidic residues. A compositionally biased stretch (polar residues) spans 130–139 (SGDTALSSGT). Residues 143-158 (WQPPLPPQRPSSPPPA) show a composition bias toward pro residues. N-linked (GlcNAc...) asparagine glycosylation is present at N263. The Cysteine switch signature appears at 295–302 (HHCGVISD). C297 contributes to the Zn(2+) binding site. The region spanning 328 to 548 (YNIETVVVAD…KASSCLLHTD (221 aa)) is the Peptidase M12B domain. 11 cysteine pairs are disulfide-bonded: C404/C469, C444/C451, C463/C543, C502/C527, C572/C596, C583/C604, C591/C623, C617/C628, C648/C683, C652/C688, and C663/C673. Zn(2+) is bound at residue H485. Residue E486 is part of the active site. The Zn(2+) site is built by H489 and H495. The Disintegrin domain occupies 549–636 (PQSLSSVLVP…ECTRRTPAPE (88 aa)). The TSP type-1 1 domain maps to 637–689 (HLAGEWSPWSSCSRSCSSGVSSRERKCPGLGSEARDCNGPRKQYRICENPPCP). The tract at residues 794-917 (VIKGDFNHTR…PDNQSSKEPG (124 aa)) is spacer. Residues N800, N910, N931, N952, and N1012 are each glycosylated (N-linked (GlcNAc...) asparagine). 4 consecutive TSP type-1 domains span residues 918–978 (PLFM…NEQP), 979–1040 (CQTR…QDCM), 1042–1086 (VWEA…EDCE), and 1090–1147 (KCYV…QPCN). Cystine bridges form between C991/C1034, C995/C1039, and C1006/C1023. The PLAC domain maps to 1163 to 1202 (LTFKCLGDQWPVYCRVIREKNLCQDMRWYQRCCETCRDFY).

It depends on Zn(2+) as a cofactor. In terms of processing, the precursor is cleaved by a furin endopeptidase. Glycosylated. Can be O-fucosylated by POFUT2 on a serine or a threonine residue found within the consensus sequence C1-X(2)-(S/T)-C2-G of the TSP type-1 repeat domains where C1 and C2 are the first and second cysteine residue of the repeat, respectively. Fucosylated repeats can then be further glycosylated by the addition of a beta-1,3-glucose residue by the glucosyltransferase, B3GALTL. Fucosylation mediates the efficient secretion of ADAMTS family members. Can also be C-glycosylated with one or two mannose molecules on tryptophan residues within the consensus sequence W-X-X-W of the TPRs, and N-glycosylated. These other glycosylations can also facilitate secretion. As to expression, expressed predominantly in fetal ovary, low levels of expression is also detected in kidney, heart, skeletal muscle, lung and testis.

It localises to the secreted. Its subcellular location is the extracellular space. It is found in the extracellular matrix. The chain is A disintegrin and metalloproteinase with thrombospondin motifs 19 (Adamts19) from Mus musculus (Mouse).